We begin with the raw amino-acid sequence, 357 residues long: Heat-inducible transcription repressor HrcA (357 aa).

The protein belongs to the HrcA family.

In terms of biological role, negative regulator of class I heat shock genes (grpE-dnaK-dnaJ and groELS operons). Prevents heat-shock induction of these operons. This is Heat-inducible transcription repressor HrcA from Anabaena sp. (strain L31).